A 1481-amino-acid polypeptide reads, in one-letter code: MAFSFGNAGGGGGGVTQGKDLEVIQTEGLGFLALAGDAKVQLTSKWSPPPAPTASLLSIASRKGLVAAAGPDAVHVATTESVRKAFLAEKNGDSEVRPFNPEAKLPLPLRISQLAFTADEQYLVLSAETGGGLRAYDVNSLTQGNTQSAFELATNGETLRQLAPNPMPESAAFCAIVTTNGNLYMANLAERTLVSGPNGPTLRSQVSCAAWSTKGKQLVAGMADGSIYQMTPDGTEKAHIPKPPNLGDYHVSSVVWLENNVFLTIHNPTNSTNPDDKTVYHVITRQQSSGSPPNFTFQKLNDPVEPFVADKTPHHTVLRLKDFPPNLQDLLLVSSTAVETIGLLTRSKTPLATDKPADAITNVFTTTELADDSRRAQLPMSEDMMETYPIGVALDLSSKEKVYKPIPTDEEIEYSPGPLPGLWVLNNEGVLASWWVVYNESIRAGTTYSGIGGSSEVIPASPAPALASSTAPVPAFASPVSKPTFGSPSPATPAFGGPSALGTKASPWATAGGAASSTPTFGQPSFGKPAAPAFGQASFPGLGQKVSPWATGSTTSAAPAFGQSGFASAGTAPGKVFGSSFTAPSSGGFASFATKSGFASLSAPSGGSSIFSSKPGAPLTSAAPEVSMDTDTAFPPPSTKTDKPAFGSSPFVLGSTFKADPTAAHDIEKPKEGESKSLFDTGFGLSLEDAAKQPASAAESKDEEMRSTTPPLPPPTETKPKSIFESTTPTTTPAPQKFEFKTTTPSGFSTLLGSTKPVASSMPNIFATPKPTSAEKPKSIFDTLKPKEESKENLLKASEPPLPPDTTSKAVFQPGSSSSESAESSPGAAAKAAFKVGNDETPKPQKELAPKPEAVPLPPDFVKAKPKTEAKETKAEEPAVSPNLPVKPLAKKAEPIPAVPESASEEEQGQAEEEEAESGEEEEEEEEEGEGEEEEEEEEEEEEEEEEGEEGEEQSEAGSEGSGVDVAKDLSPTAKFGSMTPGYTPHTSLGGMAESTFSTISRSEVAEQSRPLFGEITKNAPPLFPAAGPLPVSPRSPSPVRGVVRSSILRPTETPRPVDTTPVPSRKGLLQKTASFGMSTGQKPAVDPNVKAQRKLAEKLKAEEQVLVDPEDEGIQQILQSKVEPTLRMNEFLAVDTKLAPMKPGRDDVPNACETLWRDINRMIDRLGLNSRSLQSFILGHTSHGKPGGRQKDDLEKPDDWVLIEAYDLGDMIDNKLARELEAGRIKDVEGTMAAIHNLGRDLAKLRAKEEDLRKLFNAQVDPDQIALTKALPLSAEQLAQQNELRRSYASFSKLLTEAEEALTVLKAKLASANAARGRRGAGAAQVPTVDAIIRTINKMTSMAEKRSGDIDVLESQMRKLRIGSLGPAGTPNGNGVGAGTVVPATPGGGGRSRESSPFVTPQSSRRAMFMSPGSVGTATPRGLLAATGTPSPTKKKLSMYTAEEKRELRAREAKRKATLRMLRESLARVGPNVVRLRDDD.

WD repeat units follow at residues 106–146 (PLPL…QGNT) and 201–241 (TLRS…AHIP). PXFG repeat units lie at residues 483 to 486 (PTFG), 493 to 496 (PAFG), 519 to 522 (PTFG), 524 to 527 (PSFG), 532 to 535 (PAFG), and 559 to 562 (PAFG). Low complexity predominate over residues 607 to 616 (GSSIFSSKPG). 2 disordered regions span residues 607-647 (GSSI…PAFG) and 662-991 (TAAH…SLGG). A PXFG 7 repeat occupies 644 to 647 (PAFG). The span at 663–677 (AAHDIEKPKEGESKS) shows a compositional bias: basic and acidic residues. Polar residues-rich tracts occupy residues 724 to 734 (FESTTPTTTPA) and 741 to 763 (KTTTPSGFSTLLGSTKPVASSMP). The span at 773-794 (SAEKPKSIFDTLKPKEESKENL) shows a compositional bias: basic and acidic residues. Over residues 814–833 (PGSSSSESAESSPGAAAKAA) the composition is skewed to low complexity. Basic and acidic residues-rich tracts occupy residues 837-850 (GNDETPKPQKELAP) and 862-877 (VKAKPKTEAKETKAEE). A compositionally biased stretch (acidic residues) spans 903 to 955 (ASEEEQGQAEEEEAESGEEEEEEEEEGEGEEEEEEEEEEEEEEEEGEEGEEQS). Coiled-coil stretches lie at residues 903–957 (ASEE…QSEA) and 1233–1318 (MAAI…AARG). A Bipartite nuclear localization signal motif is present at residues 1345–1352 (EKRSGDID). Disordered regions lie at residues 1385-1404 (ATPGGGGRSRESSPFVTPQS) and 1414-1443 (GSVGTATPRGLLAATGTPSPTKKKLSMYTA). A Bipartite nuclear localization signal motif is present at residues 1435-1442 (KKKLSMYT).

In terms of assembly, component of the nuclear pore complex (NPC). NPC constitutes the exclusive means of nucleocytoplasmic transport. NPCs allow the passive diffusion of ions and small molecules and the active, nuclear transport receptor-mediated bidirectional transport of macromolecules such as proteins, RNAs, ribonucleoparticles (RNPs), and ribosomal subunits across the nuclear envelope. Due to its 8-fold rotational symmetry, all subunits are present with 8 copies or multiples thereof.

It is found in the nucleus. It localises to the nuclear pore complex. The protein resides in the nucleus membrane. In terms of biological role, functions as a component of the nuclear pore complex (NPC). NPC components, collectively referred to as nucleoporins (NUPs), can play the role of both NPC structural components and of docking or interaction partners for transiently associated nuclear transport factors. Active directional transport is assured by both, a Phe-Gly (FG) repeat affinity gradient for these transport factors across the NPC and a transport cofactor concentration gradient across the nuclear envelope (GSP1 and GSP2 GTPases associated predominantly with GTP in the nucleus, with GDP in the cytoplasm). NUP159 plays an important role in several nuclear export pathways including poly(A)+ RNA, pre-ribosome, and protein export. This is Nucleoporin NUP159 (NUP159) from Chaetomium thermophilum (strain DSM 1495 / CBS 144.50 / IMI 039719) (Thermochaetoides thermophila).